The following is a 365-amino-acid chain: Transmembrane protein 25 (365 aa).

Residues 1-26 (MELPLSQATLRHTLLLLPALLSSGQG) form the signal peptide. The Extracellular portion of the chain corresponds to 27–232 (ELAPQIDGQT…APGLLATRIE (206 aa)). The Ig-like domain maps to 30 to 123 (PQIDGQTWAE…SGRPANASVI (94 aa)). The cysteines at positions 52 and 107 are disulfide-linked. 4 N-linked (GlcNAc...) asparagine glycosylation sites follow: N106, N162, N192, and N205. Residues 233 to 253 (VPLLGIVVAGGLALGTLVGFS) form a helical membrane-spanning segment. Residues 254 to 365 (TLVACLVCRK…SSVSSDEIWL (112 aa)) are Cytoplasmic-facing.

In terms of assembly, interacts with GRIN2B. As to expression, expressed throughout the brain with higher levels within the hippocampus.

The protein resides in the late endosome. It is found in the lysosome. It localises to the cell membrane. The protein localises to the secreted. Functionally, in neurons, modulates the degradation of NMDA receptor GRIN2B subunit. Plays a role in the regulation of neuronal excitability. This chain is Transmembrane protein 25, found in Mus musculus (Mouse).